We begin with the raw amino-acid sequence, 756 residues long: Phosphoinositide 3-kinase regulatory subunit 6 (756 aa).

Disordered regions lie at residues 570–589 (SKSP…EGTG) and 716–738 (CSRT…EKNM). Residues 717-731 (SRTQKSKTSALNSHG) show a composition bias toward polar residues.

Heterodimer of a catalytic subunit (PIK3CG) and a regulatory (PIK3R6) subunit. The binding of PIK3R6 to PIK3CG may exclude the binding of PIK3R5 to PIK3CG. Interacts with beta-gamma G protein dimers. Interacts with PDE3B and RAPGEF3; form a signaling complex that regulates phosphatidylinositol 3-kinase gamma in angiogenesis. In terms of tissue distribution, highly expressed in heart. In a lower extent, also expressed in brain, spleen, lung, liver, kidney, prostate, thyroid, salivary gland, dendritic cells, macrophages and neutrophils.

It is found in the cytoplasm. The protein localises to the cell membrane. Its function is as follows. Regulatory subunit of the PI3K gamma complex. Acts as an adapter to drive activation of PIK3CG by beta-gamma G protein dimers. The PIK3CG:PIK3R6 heterodimer is much less sensitive to beta-gamma G proteins than PIK3CG:PIK3R5 and its membrane recruitment and beta-gamma G protein dimer-dependent activation requires HRAS bound to PIK3CG. Recruits of the PI3K gamma complex to a PDE3B:RAPGEF3 signaling complex involved in angiogenesis; signaling seems to involve RRAS. The polypeptide is Phosphoinositide 3-kinase regulatory subunit 6 (Pik3r6) (Mus musculus (Mouse)).